Consider the following 105-residue polypeptide: Wound-induced protein 1 (105 aa).

To potato anionic peroxidase. Ubiquitous.

This is Wound-induced protein 1 (WUN1) from Solanum tuberosum (Potato).